We begin with the raw amino-acid sequence, 306 residues long: Glutathione transport system permease protein GsiC (306 aa).

The Cytoplasmic segment spans residues 1–8 (MLNYVIKR). Residues 9-29 (LLGLIPTLFIVSVLVFLFVHM) traverse the membrane as a helical segment. The Periplasmic segment spans residues 30-102 (LPGDPARLIA…SRFMPTLWLT (73 aa)). One can recognise an ABC transmembrane type-1 domain in the interval 95 to 292 (FMPTLWLTIT…LEFILINLVV (198 aa)). The helical transmembrane segment at 103–123 (ITSMVWAVIFGMAAGIIAAVW) threads the bilayer. Residues 124–134 (RNRWPDRLSMT) are Cytoplasmic-facing. Residues 135-155 (IAVSGISFPAFALGMLLIQVF) traverse the membrane as a helical segment. At 156–168 (SVELGWLPTVGAD) the chain is on the periplasmic side. The helical transmembrane segment at 169 to 189 (SWQHYILPSLTLGAAVAAVMA) threads the bilayer. Topologically, residues 190–228 (RFTRASFVDVLSEDYMRTARAKGVSETWVVLKHGLRNAM) are cytoplasmic. A helical transmembrane segment spans residues 229–249 (IPVVTMMGLQFGFLLGGSIVV). The Periplasmic portion of the chain corresponds to 250–277 (EKVFNWPGLGRLLVDSVEMRDYPVIQAE). A helical transmembrane segment spans residues 278-298 (ILLFSLEFILINLVVDVLYAA). Residues 299 to 306 (INPAIRYK) are Cytoplasmic-facing.

This sequence belongs to the binding-protein-dependent transport system permease family. The complex is composed of two ATP-binding proteins (GsiA), two transmembrane proteins (GsiC and GsiD) and a solute-binding protein (GsiB).

It localises to the cell inner membrane. In terms of biological role, part of the ABC transporter complex GsiABCD involved in glutathione import. Probably responsible for the translocation of the substrate across the membrane. The protein is Glutathione transport system permease protein GsiC of Escherichia coli O6:H1 (strain CFT073 / ATCC 700928 / UPEC).